The chain runs to 237 residues: Ribosomal RNA small subunit methyltransferase G (237 aa).

S-adenosyl-L-methionine is bound by residues Gly78, Phe83, 129–130 (AE), and Arg148.

Belongs to the methyltransferase superfamily. RNA methyltransferase RsmG family.

Its subcellular location is the cytoplasm. Specifically methylates the N7 position of a guanine in 16S rRNA. The protein is Ribosomal RNA small subunit methyltransferase G of Streptococcus equi subsp. equi (strain 4047).